We begin with the raw amino-acid sequence, 236 residues long: Eukaryotic translation initiation factor 3 subunit K (236 aa).

The PCI domain occupies 42 to 222; that stretch reads YDKDILVTTL…TIKSRNIEEK (181 aa).

The protein belongs to the eIF-3 subunit K family. As to quaternary structure, component of the eukaryotic translation initiation factor 3 (eIF-3) complex.

The protein resides in the cytoplasm. Its function is as follows. Component of the eukaryotic translation initiation factor 3 (eIF-3) complex, which is involved in protein synthesis of a specialized repertoire of mRNAs and, together with other initiation factors, stimulates binding of mRNA and methionyl-tRNAi to the 40S ribosome. The eIF-3 complex specifically targets and initiates translation of a subset of mRNAs involved in cell proliferation. This is Eukaryotic translation initiation factor 3 subunit K from Brugia malayi (Filarial nematode worm).